The sequence spans 166 residues: Lipoprotein signal peptidase (166 aa).

3 helical membrane-spanning segments follow: residues 12 to 32, 70 to 90, and 102 to 122; these read WLWL…LILQ, WFFA…MYRS, and ALII…GFVV. Catalysis depends on residues Asp123 and Asp141. Residues 137 to 157 form a helical membrane-spanning segment; the sequence is FNLADTAICIGAALIVLEGFL.

It belongs to the peptidase A8 family.

It is found in the cell inner membrane. It catalyses the reaction Release of signal peptides from bacterial membrane prolipoproteins. Hydrolyzes -Xaa-Yaa-Zaa-|-(S,diacylglyceryl)Cys-, in which Xaa is hydrophobic (preferably Leu), and Yaa (Ala or Ser) and Zaa (Gly or Ala) have small, neutral side chains.. It participates in protein modification; lipoprotein biosynthesis (signal peptide cleavage). In terms of biological role, this protein specifically catalyzes the removal of signal peptides from prolipoproteins. This chain is Lipoprotein signal peptidase, found in Salmonella typhi.